The sequence spans 311 residues: Methionyl-tRNA formyltransferase (311 aa).

110 to 113 (SLLP) contributes to the (6S)-5,6,7,8-tetrahydrofolate binding site.

The protein belongs to the Fmt family.

The catalysed reaction is L-methionyl-tRNA(fMet) + (6R)-10-formyltetrahydrofolate = N-formyl-L-methionyl-tRNA(fMet) + (6S)-5,6,7,8-tetrahydrofolate + H(+). Its function is as follows. Attaches a formyl group to the free amino group of methionyl-tRNA(fMet). The formyl group appears to play a dual role in the initiator identity of N-formylmethionyl-tRNA by promoting its recognition by IF2 and preventing the misappropriation of this tRNA by the elongation apparatus. This chain is Methionyl-tRNA formyltransferase, found in Streptococcus pneumoniae (strain Taiwan19F-14).